We begin with the raw amino-acid sequence, 124 residues long: TP53-target gene 3 protein (124 aa).

Polar residues predominate over residues 1–11; the sequence is MRASPCISQPA. Residues 1–42 form a disordered region; the sequence is MRASPCISQPAASWHPRPSALRPTAGSGPDTRTPGTVEDGSA.

As to expression, strongly expressed in testis. Weakly expressed in heart, placenta and skeletal muscle.

The protein localises to the cytoplasm. Its subcellular location is the nucleus. Functionally, may play a significant role in p53/TP53-mediating signaling pathway. In Homo sapiens (Human), this protein is TP53-target gene 3 protein.